The primary structure comprises 835 residues: Ribonucleoside-diphosphate reductase large subunit (835 aa).

Residues Ser-222, 237 to 238 (SC), Gly-266, 447 to 451 (NLCCE), and 660 to 664 (PSASS) each bind substrate. Residues Cys-238 and Cys-464 are joined by a disulfide bond. Asn-447 functions as the Proton acceptor in the catalytic mechanism. The active-site Cysteine radical intermediate is the Cys-449. The active-site Proton acceptor is Glu-451.

Belongs to the ribonucleoside diphosphate reductase large chain family. As to quaternary structure, heterotetramer composed of a homodimer of the large subunit (R1) and a homodimer of the small subunit (R2). Larger multisubunit protein complex are also active, composed of (R1)n(R2)n.

The catalysed reaction is a 2'-deoxyribonucleoside 5'-diphosphate + [thioredoxin]-disulfide + H2O = a ribonucleoside 5'-diphosphate + [thioredoxin]-dithiol. Functionally, ribonucleoside-diphosphate reductase holoenzyme provides the precursors necessary for viral DNA synthesis. Allows virus growth in non-dividing cells. Catalyzes the biosynthesis of deoxyribonucleotides from the corresponding ribonucleotides. The chain is Ribonucleoside-diphosphate reductase large subunit from Magallana gigas (Pacific oyster).